We begin with the raw amino-acid sequence, 321 residues long: Pheromone-regulated membrane protein 5 (321 aa).

Positions 35-59 (SSSSSSSSLPLLSNSTSSSIIPSIT) are disordered. A helical transmembrane segment spans residues 81–101 (FIIVGGIAGVIFLAILLWWVI). At S132 the chain carries Phosphoserine. Residues 241–250 (TISSSSASSL) are compositionally biased toward low complexity. A disordered region spans residues 241–321 (TISSSSASSL…HMLEGKEQDE (81 aa)). Residues 253-264 (GNEKEVGEDIRK) show a composition bias toward basic and acidic residues. Positions 279 to 288 (SPESDGSVNR) are enriched in polar residues. S282, S285, and S291 each carry phosphoserine. A compositionally biased stretch (basic and acidic residues) spans 312–321 (HMLEGKEQDE). K317 participates in a covalent cross-link: Glycyl lysine isopeptide (Lys-Gly) (interchain with G-Cter in ubiquitin).

Belongs to the PRM5 family.

It is found in the membrane. In Saccharomyces cerevisiae (strain YJM789) (Baker's yeast), this protein is Pheromone-regulated membrane protein 5 (PRM5).